Here is a 379-residue protein sequence, read N- to C-terminus: Protein RecA (379 aa).

Glycine 79–threonine 86 is a binding site for ATP.

This sequence belongs to the RecA family.

It localises to the cytoplasm. In terms of biological role, can catalyze the hydrolysis of ATP in the presence of single-stranded DNA, the ATP-dependent uptake of single-stranded DNA by duplex DNA, and the ATP-dependent hybridization of homologous single-stranded DNAs. It interacts with LexA causing its activation and leading to its autocatalytic cleavage. This is Protein RecA from Streptococcus thermophilus.